A 406-amino-acid polypeptide reads, in one-letter code: MNEYSLFTSESVSEGHPDKIADQISDAVLDAIIARDKQARVACETMVKTGVAIVAGEITTSAWVDLEDLVRRVINDIGYTSSDVGFDGNTCGVLNLIGKQSVDIAQGVDRSKPEDQGAGDQGLMFGYATNETDSYMPAPIHYSHRLVERQAELRKHGLLPWLRPDAKSQLTFRYDAQGKPCAVDAVVLSTQHDPDIDQDELREMVKREIIEEVIPAEWLTETTKYHINPTGNFVIGGPVGDCGLTGRKIIVDTYGGMARHGGGAFSGKDPSKVDRSAAYAGRYVAKNVVAAGLAERCEIQVSYAIGVAEPTSVSVDTFGTGKISDAKIVELVREHFDLRPNAITRMLDLLHPMYQLTAAYGHFGREPFETSYTWTDVGGKQHVETFTAFPWEKTDRADALRQAAGL.

His16 lines the ATP pocket. Asp18 lines the Mg(2+) pocket. Glu44 provides a ligand contact to K(+). Residues Glu57 and Gln100 each coordinate L-methionine. A flexible loop region spans residues 100-110 (QSVDIAQGVDR). Residues 165–167 (DAK), Asp241, 247–248 (RK), Ala264, and Lys268 contribute to the ATP site. Position 241 (Asp241) interacts with L-methionine. Lys272 is an L-methionine binding site.

Belongs to the AdoMet synthase family. In terms of assembly, homotetramer; dimer of dimers. Requires Mg(2+) as cofactor. The cofactor is K(+).

It is found in the cytoplasm. It catalyses the reaction L-methionine + ATP + H2O = S-adenosyl-L-methionine + phosphate + diphosphate. The protein operates within amino-acid biosynthesis; S-adenosyl-L-methionine biosynthesis; S-adenosyl-L-methionine from L-methionine: step 1/1. Catalyzes the formation of S-adenosylmethionine (AdoMet) from methionine and ATP. The overall synthetic reaction is composed of two sequential steps, AdoMet formation and the subsequent tripolyphosphate hydrolysis which occurs prior to release of AdoMet from the enzyme. This chain is S-adenosylmethionine synthase, found in Chromohalobacter salexigens (strain ATCC BAA-138 / DSM 3043 / CIP 106854 / NCIMB 13768 / 1H11).